Consider the following 294-residue polypeptide: Homeobox-leucine zipper protein ATHB-13 (294 aa).

Residues 82 to 141 constitute a DNA-binding region (homeobox); that stretch reads MGEKKRRLNMEQVKTLEKNFELGNKLEPERKMQLARALGLQPRQIAIWFQNRRARWKTKQ. A leucine-zipper region spans residues 142–177; the sequence is LEKDYDTLKRQFDTLKAENDLLQTHNQKLQAEIMGL. The segment at 181-246 is disordered; it reads EQTESINLNK…FFPPSPATAT (66 aa). A compositionally biased stretch (low complexity) spans 197-210; the sequence is SNRSDNSSDNLRLD. Positions 214–223 are enriched in polar residues; the sequence is APPSNDSTLT.

The protein belongs to the HD-ZIP homeobox family. Class I subfamily. As to expression, predominantly expressed in leaves and flowers.

Its subcellular location is the nucleus. Its function is as follows. Probable transcription factor that may act in the sucrose-signaling pathway. The chain is Homeobox-leucine zipper protein ATHB-13 (ATHB-13) from Arabidopsis thaliana (Mouse-ear cress).